A 124-amino-acid polypeptide reads, in one-letter code: MSIENLVEEIGKLTLTEAAALVKALEEKFGVSAAPVAVAAGVAAPAGDVAAVEEQTEFTVVLVAAGESKINVIKVVRSITGLGLKEAKDLVDGAPKNVKEAISKDEAEKIAKELKDAGASVEVK.

It belongs to the bacterial ribosomal protein bL12 family. As to quaternary structure, homodimer. Part of the ribosomal stalk of the 50S ribosomal subunit. Forms a multimeric L10(L12)X complex, where L10 forms an elongated spine to which 2 to 4 L12 dimers bind in a sequential fashion. Binds GTP-bound translation factors.

Its function is as follows. Forms part of the ribosomal stalk which helps the ribosome interact with GTP-bound translation factors. Is thus essential for accurate translation. The sequence is that of Large ribosomal subunit protein bL12 from Chlorobium chlorochromatii (strain CaD3).